A 610-amino-acid polypeptide reads, in one-letter code: Zinc finger protein 823 (610 aa).

One can recognise a KRAB domain in the interval 4-97 (VAFEDVAVNF…VNKNTPRVNP (94 aa)). 10 consecutive C2H2-type zinc fingers follow at residues 164-186 (FDCK…MAAH), 192-214 (YKCK…ERTH), 220-242 (YECK…ERIH), 248-270 (YECK…ERTH), 276-298 (YKCT…ERTH), 304-326 (YACK…MIRH), 332-354 (HKCK…ETTH), 360-382 (YECK…MITH), 388-410 (QKCK…ERTH), and 416-438 (YQCK…EATH). The C2H2-type 11; atypical zinc finger occupies 444-465 (YKCQCGKAFSDLSSFQNHETTH). 5 consecutive C2H2-type zinc fingers follow at residues 471–493 (YECK…KRTH), 499–521 (YECK…ERIH), 527–549 (YECK…ERIH), 555–577 (YECL…EKTH), and 583–605 (YECK…KRTH).

It belongs to the krueppel C2H2-type zinc-finger protein family.

The protein resides in the nucleus. In terms of biological role, may be involved in transcriptional regulation. The polypeptide is Zinc finger protein 823 (ZNF823) (Homo sapiens (Human)).